A 589-amino-acid polypeptide reads, in one-letter code: Ubiquilin-1 (589 aa).

The span at 1–11 (MAESGESGGPP) shows a compositional bias: gly residues. Disordered stretches follow at residues 1–35 (MAESGESGGPPGSQDSAAGAEGAGAPAAAASAEPK) and 110–145 (NRPQDHSAQQTNTAGSNVTTSSTPNSNSTSGSATSN). N-acetylalanine is present on Ala2. Over residues 12-35 (GSQDSAAGAEGAGAPAAAASAEPK) the composition is skewed to low complexity. A Ubiquitin-like domain is found at 37–111 (MKVTVKTPKE…VHLVIKTQNR (75 aa)). Polar residues predominate over residues 110–124 (NRPQDHSAQQTNTAG). Residues 125–145 (SNVTTSSTPNSNSTSGSATSN) show a composition bias toward low complexity. The interaction with UBXN4 stretch occupies residues 178 to 428 (QLLSNPEMMV…LNNPLFAGNP (251 aa)). 2 STI1 domains span residues 182–210 (NPEMMVQIMENPFVQSMLSNPDLMRQLIM) and 212–251 (NPQMQQLIQRNPEISHMLNNPDIMRQTLELARNPAMMQEM). The interval 295-371 (PFASLVSNTS…NLVPGVGASM (77 aa)) is disordered. The segment covering 299–313 (LVSNTSSGEGSQPSR) has biased composition (polar residues). The span at 327–360 (QTSQSSSASSGTASTVGGTTGSTASGTSGQSTTA) shows a compositional bias: low complexity. STI1 domains follow at residues 387 to 434 (NPQL…QEQM) and 438 to 470 (LPTFLQQMQNPDTLSAMSNPRAMQALLQIQQGL). A disordered region spans residues 488 to 520 (LGALGSTGGSSGTNGSNATPSENTSPTAGTTEP). The span at 489–499 (GALGSTGGSSG) shows a compositional bias: gly residues. Residues 509-520 (ENTSPTAGTTEP) are compositionally biased toward polar residues. The UBA domain maps to 546–586 (RFQQQLEQLSAMGFLNREANLQALIATGGDINAAIERLLGS).

Monomer and homodimer. Heterodimer with UBQLN2. Binds CD47, NBL1, GABRA1, GABRA2, GABRA3, GABRA6, GABRB1, GABRB2 and GABRB3. Binds UBE3A, BTRC, P4HB and MTOR. Interacts with the proteasome 19S subunit. Interacts (via ubiquitin-like domain) with TREX1; the interaction is direct and may control TREX1 subcellular location. Forms a complex with UBXN4 and VCP. Interacts (via UBA domain) with UBQLN4 (via ubiquitin-like domain). Found in a complex with UBQLN2 and MAP1LC3A/B/C. The monomeric form interacts with PSEN2. The monomeric form interacts with PSEN1. Interacts with ORAI1. Interacts (via UBA domain) with TICAM1. Interacts with EPS15. Interacts (via UBA domain) with UBA52 and (via ubiquitin-like domain) with PSMD3 and PSMD4. Interacts with HERPUD1. Interacts with MAP1LC3A/B/C in the presence of UBQLN4. Interacts (via ubiquitin-like domain) with EPS15 (via UIM domains) and both the ubiquitinated and non-ubiquitinated forms can interact with EPS15. Interacts (via ubiquitin-like domain) with EPS15L1, HGS (via UIM domain) and STAM2 (via UIM domain). Interacts with BCL2L10/BCL-B; in the cytoplasm. In terms of assembly, monomeric form interacts with PSEN1. Degraded during both macroautophagy and during chaperone-mediated autophagy (CMA). Post-translationally, phosphorylated. In terms of processing, ubiquitinated. In terms of tissue distribution, brain (at protein level). Ubiquitous. Highly expressed throughout the brain; detected in neurons and in neuropathological lesions, such as neurofibrillary tangles and Lewy bodies. Highly expressed in heart, placenta, pancreas, lung, liver, skeletal muscle and kidney.

It is found in the cytoplasm. The protein resides in the nucleus. Its subcellular location is the endoplasmic reticulum. The protein localises to the cytoplasmic vesicle. It localises to the autophagosome. It is found in the cell membrane. Functionally, plays an important role in the regulation of different protein degradation mechanisms and pathways including ubiquitin-proteasome system (UPS), autophagy and endoplasmic reticulum-associated protein degradation (ERAD) pathway. Mediates the proteasomal targeting of misfolded or accumulated proteins for degradation by binding (via UBA domain) to their polyubiquitin chains and by interacting (via ubiquitin-like domain) with the subunits of the proteasome. Plays a role in the ERAD pathway via its interaction with ER-localized proteins UBXN4, VCP and HERPUD1 and may form a link between the polyubiquitinated ERAD substrates and the proteasome. Involved in the regulation of macroautophagy and autophagosome formation; required for maturation of autophagy-related protein LC3 from the cytosolic form LC3-I to the membrane-bound form LC3-II and may assist in the maturation of autophagosomes to autolysosomes by mediating autophagosome-lysosome fusion. Negatively regulates the TICAM1/TRIF-dependent toll-like receptor signaling pathway by decreasing the abundance of TICAM1 via the autophagic pathway. Promotes the ubiquitination and lysosomal degradation of ORAI1, consequently down-regulating the ORAI1-mediated Ca2+ mobilization. Suppresses the maturation and proteasomal degradation of amyloid beta A4 protein (A4) by stimulating the lysine 63 (K63)-linked polyubiquitination. Delays the maturation of A4 by sequestering it in the Golgi apparatus and preventing its transport to the cell surface for subsequent processing. Ubiquitinates BCL2L10 and thereby stabilizes protein abundance. Plays a role in unfolded protein response (UPR) by attenuating the induction of UPR-inducible genes, DDTI3/CHOP, HSPA5 and PDIA2 during ER stress. Plays a key role in the regulation of the levels of PSEN1 by targeting its accumulation to aggresomes which may then be removed from cells by autophagocytosis. In terms of biological role, plays a role in unfolded protein response (UPR) by attenuating the induction of UPR-inducible genes, DDTI3/CHOP, HSPA5 and PDIA2 during ER stress. The protein is Ubiquilin-1 (UBQLN1) of Homo sapiens (Human).